Reading from the N-terminus, the 172-residue chain is MMCYDNSEMLSRLIDVMANDKPLMLTSPKQRQGSRFEQRACEFLQERGLILVAQNWQQPKVGELDLVMLEKGQAWSTLVFVEVRQRQHSYFGDAAISVTAGKQRKIIKAARHFLQQNPQYHKYECRFDVIAYNTMNKKNKNEANITLDNQPNQRLEINQPEWLQGAFITSAW.

This sequence belongs to the UPF0102 family.

The chain is UPF0102 protein Pcryo_2198 from Psychrobacter cryohalolentis (strain ATCC BAA-1226 / DSM 17306 / VKM B-2378 / K5).